Here is a 556-residue protein sequence, read N- to C-terminus: Membrane protein insertase YidC (556 aa).

5 helical membrane-spanning segments follow: residues 6 to 26 (IVLY…WQID), 332 to 352 (LDLT…FSLM), 358 to 378 (VVGN…LAFY), 428 to 448 (LGGC…YWVL), and 501 to 521 (VMMF…SGLV).

The protein belongs to the OXA1/ALB3/YidC family. Type 1 subfamily. As to quaternary structure, interacts with the Sec translocase complex via SecD. Specifically interacts with transmembrane segments of nascent integral membrane proteins during membrane integration.

It is found in the cell inner membrane. Functionally, required for the insertion and/or proper folding and/or complex formation of integral membrane proteins into the membrane. Involved in integration of membrane proteins that insert both dependently and independently of the Sec translocase complex, as well as at least some lipoproteins. Aids folding of multispanning membrane proteins. In Legionella pneumophila (strain Lens), this protein is Membrane protein insertase YidC.